Here is a 385-residue protein sequence, read N- to C-terminus: Meiotic recombination protein SPO11-2 (385 aa).

The Topo IIA-type catalytic domain maps to 24 to 169 (LPPAEVRARI…LGIMASSRGA (146 aa)). The active-site O-(5'-phospho-DNA)-tyrosine intermediate is the Tyr126. 2 residues coordinate Mg(2+): Glu219 and Asp272.

This sequence belongs to the TOP6A family. Interacts with TOP6B. Requires Mg(2+) as cofactor. In terms of tissue distribution, highly expressed in flowers before pollination. Expressed in roots and shoots.

It is found in the nucleus. The catalysed reaction is ATP-dependent breakage, passage and rejoining of double-stranded DNA.. Required for meiotic recombination. Mediates DNA cleavage that forms the double-strand breaks (DSB) that initiate meiotic recombination. In Oryza sativa subsp. indica (Rice), this protein is Meiotic recombination protein SPO11-2 (SPO11-2).